Here is a 307-residue protein sequence, read N- to C-terminus: Small ribosomal subunit biogenesis GTPase RsgA (307 aa).

The interval 1-21 is disordered; the sequence is MPSEHPFSDGIPTPNPKETMN. Residues 85-242 enclose the CP-type G domain; sequence RQDAWKTKLI…LIDSPGLQEF (158 aa). GTP is bound by residues 135–138 and 184–192; these read NKAD and GQSGMGKST. Residues cysteine 266, cysteine 271, histidine 273, and cysteine 279 each contribute to the Zn(2+) site.

Belongs to the TRAFAC class YlqF/YawG GTPase family. RsgA subfamily. In terms of assembly, monomer. Associates with 30S ribosomal subunit, binds 16S rRNA. Zn(2+) is required as a cofactor.

The protein resides in the cytoplasm. In terms of biological role, one of several proteins that assist in the late maturation steps of the functional core of the 30S ribosomal subunit. Helps release RbfA from mature subunits. May play a role in the assembly of ribosomal proteins into the subunit. Circularly permuted GTPase that catalyzes slow GTP hydrolysis, GTPase activity is stimulated by the 30S ribosomal subunit. This Neisseria meningitidis serogroup B (strain ATCC BAA-335 / MC58) protein is Small ribosomal subunit biogenesis GTPase RsgA.